The primary structure comprises 472 residues: Adenosylhomocysteinase (472 aa).

Residues threonine 61, aspartate 136, and glutamate 196 each coordinate substrate. Residue 197-199 coordinates NAD(+); it reads TTT. The substrate site is built by lysine 226 and aspartate 230. NAD(+) contacts are provided by residues asparagine 231, 260–265, glutamate 283, asparagine 318, 339–341, and asparagine 384; these read GYGDVG and IGH.

It belongs to the adenosylhomocysteinase family. NAD(+) is required as a cofactor.

It is found in the cytoplasm. It carries out the reaction S-adenosyl-L-homocysteine + H2O = L-homocysteine + adenosine. It functions in the pathway amino-acid biosynthesis; L-homocysteine biosynthesis; L-homocysteine from S-adenosyl-L-homocysteine: step 1/1. In terms of biological role, may play a key role in the regulation of the intracellular concentration of adenosylhomocysteine. This is Adenosylhomocysteinase from Cupriavidus necator (strain ATCC 17699 / DSM 428 / KCTC 22496 / NCIMB 10442 / H16 / Stanier 337) (Ralstonia eutropha).